The following is a 400-amino-acid chain: Enoyl-[acyl-carrier-protein] reductase [NADH] 1 (400 aa).

NAD(+)-binding positions include 48 to 53 (GASSGY), 74 to 75 (FE), 111 to 112 (DA), and 139 to 140 (LA). Tyr225 lines the substrate pocket. The Proton donor role is filled by Tyr235. NAD(+)-binding positions include Lys244 and 273–275 (VVT).

It belongs to the TER reductase family. As to quaternary structure, monomer.

It carries out the reaction a 2,3-saturated acyl-[ACP] + NAD(+) = a (2E)-enoyl-[ACP] + NADH + H(+). Its pathway is lipid metabolism; fatty acid biosynthesis. Functionally, involved in the final reduction of the elongation cycle of fatty acid synthesis (FAS II). Catalyzes the reduction of a carbon-carbon double bond in an enoyl moiety that is covalently linked to an acyl carrier protein (ACP). This Vibrio vulnificus (strain CMCP6) protein is Enoyl-[acyl-carrier-protein] reductase [NADH] 1.